Reading from the N-terminus, the 336-residue chain is Flavonol synthase/flavanone 3-hydroxylase (336 aa).

The segment at 99–118 (EKESVAKPEDSKDIEGYGTK) is disordered. The region spanning 196-296 (MAEYMMKINY…RMSWPVFLEP (101 aa)) is the Fe2OG dioxygenase domain. 204 to 206 (NYY) is a binding site for 2-oxoglutarate. The Fe cation site is built by His221, Asp223, and His277. 2-oxoglutarate is bound at residue 287-289 (RMS).

It belongs to the iron/ascorbate-dependent oxidoreductase family. L-ascorbate is required as a cofactor. Fe(2+) serves as cofactor. Expressed in young seedlings (at protein level). Expressed in roots, emerging leaves, shoot-root transition zone, trichomes, flowers and siliques. In cotyledons, expressed mostly on the adaxial side and only in guard cells on the abaxial side.

The protein localises to the cytoplasm. It is found in the nucleus. The catalysed reaction is a (2R,3R)-dihydroflavonol + 2-oxoglutarate + O2 = a flavonol + succinate + CO2 + H2O. It catalyses the reaction a (2S)-flavan-4-one + 2-oxoglutarate + O2 = a (2R,3R)-dihydroflavonol + succinate + CO2. It participates in secondary metabolite biosynthesis; flavonoid biosynthesis. In terms of biological role, catalyzes the formation of flavonols from dihydroflavonols. It can act on dihydrokaempferol to produce kaempferol, on dihydroquercetin to produce quercitin and on dihydromyricetin to produce myricetin. In vitro catalyzes the oxidation of both enantiomers of naringenin to give both cis- and trans-dihydrokaempferol. This is Flavonol synthase/flavanone 3-hydroxylase (FLS1) from Arabidopsis thaliana (Mouse-ear cress).